A 900-amino-acid polypeptide reads, in one-letter code: Nonribosomal peptide synthetase AMT10 (900 aa).

The interval 284-686 (KQAQQNPAAM…ARRNGYIKLR (403 aa)) is adenylation. One can recognise a Carrier domain in the interval 824–900 (ELQSDMERYL…QMARNCSLLD (77 aa)). At S861 the chain carries O-(pantetheine 4'-phosphoryl)serine.

This sequence belongs to the NRP synthetase family.

The protein operates within mycotoxin biosynthesis. Functionally, nonribosomal peptide synthetase; part of the gene clusters that mediate the biosynthesis of AM-toxins, host-selective toxins (HSTs) causing Alternaria blotch on apple, a worldwide distributed disease. AM-toxins are cyclic depsipeptides containing the 3 residues 2-hydroxy-isovaleric acid (2-HIV), dehydroalanine, L-alanine which are common for all 3 AM-toxins I to III. The fourth precursor is L-alpha-amino-methoxyphenyl-valeric acid (L-Amv) for AM-toxin I, L-alpha-amino-phenyl-valeric acid (L-Apv) for AM-toxin II, and L-alpha-amino-hydroxyphenyl-valeric acid (L-Ahv) for AM-toxin III. AM-toxins have two target sites for affecting susceptible apple cells; they cause invagination of the plasma membrane and electrolyte loss and chloroplast disorganization. The non-ribosomal peptide synthetase AMT1 contains 4 catalytic modules and is responsible for activation of each residue in AM-toxin. The aldo-keto reductase AMT2 catalyzes the conversion of 2-keto-isovaleric acid (2-KIV) to 2-hydroxy-isovaleric acid (2-HIV), one of the precursor residues incorporated by AMT1 during AM-toxin biosynthesis, by reduction of its ketone to an alcohol. The cytochrome P450 monooxygenase AMT3 and the thioesterase AMT4 are also important for AM-toxin production, but their exact function within the AM-toxin biosynthesis are not known yet. Up to 21 proteins (including AMT1 to AMT4) are predicted to be involved in AM-toxin biosynthesis since their expression ishighly up-regulated in AM-toxin-producing cultures. In Alternaria alternata (Alternaria rot fungus), this protein is Nonribosomal peptide synthetase AMT10.